Reading from the N-terminus, the 151-residue chain is Large ribosomal subunit protein bL9 (151 aa).

It belongs to the bacterial ribosomal protein bL9 family.

Binds to the 23S rRNA. In Nitrosospira multiformis (strain ATCC 25196 / NCIMB 11849 / C 71), this protein is Large ribosomal subunit protein bL9.